We begin with the raw amino-acid sequence, 508 residues long: MGLPWYRVHTVVLNDPGRLLSVHIMHTALVAGWAGSMALYELAVFDPSDPVLDPMWRQGMFVIPFMTRLGITNSWGGWSITGGTITNSGIWSYEGVAGAHIVLSGLCFLAAIWHWVYWDLEIFSDERTGKPSLDLPKIFGIHLFLSGVACFGFGAFHVTGLYGPGIWVSDPYGLTGRVQSVNPAWGVGGFDPFVPGGIASHHIAAGTLGILAGLFHLSVRPPQRLYKGLRMGNIETVLSSSIAAVFFAAFVVAGTMWYGSATTPIELFGPTRYQWDQGYFQQEIYRRIGAGLAENQSLSEAWSKIPEKLAFYDYIGNNPAKGGLFRAGSMDNGDGIAVGWLGHPVFRDKEGRELFVRRMPTFFETFPVVLVDGDGIVRADVPFRRAESKYSVEQVGVTVEFYGGELNGVSYSDPATVKKYARRAQLGEIFELDRAALKSDGVFRSSPRGWFTFGHVSFALLFFFGHIWHGARTLFRDVFAGIDPDLDAQVEFGAFQKLGDPTTKRQAV.

6 consecutive transmembrane segments (helical) span residues 21 to 36, 101 to 115, 140 to 156, 203 to 218, 237 to 252, and 457 to 472; these read SVHI…WAGS, IVLS…IWHW, GIHL…FGAF, IAAG…FHLS, VLSS…AFVV, and SFAL…HGAR.

It belongs to the PsbB/PsbC family. PsbB subfamily. In terms of assembly, PSII is composed of 1 copy each of membrane proteins PsbA, PsbB, PsbC, PsbD, PsbE, PsbF, PsbH, PsbI, PsbJ, PsbK, PsbL, PsbM, PsbT, PsbX, PsbY, PsbZ, Psb30/Ycf12, at least 3 peripheral proteins of the oxygen-evolving complex and a large number of cofactors. It forms dimeric complexes. The cofactor is Binds multiple chlorophylls. PSII binds additional chlorophylls, carotenoids and specific lipids..

Its subcellular location is the plastid. It localises to the chloroplast thylakoid membrane. Functionally, one of the components of the core complex of photosystem II (PSII). It binds chlorophyll and helps catalyze the primary light-induced photochemical processes of PSII. PSII is a light-driven water:plastoquinone oxidoreductase, using light energy to abstract electrons from H(2)O, generating O(2) and a proton gradient subsequently used for ATP formation. In Pelargonium hortorum (Common geranium), this protein is Photosystem II CP47 reaction center protein.